The primary structure comprises 209 residues: Large ribosomal subunit protein bL9 (209 aa).

Residues 184–209 (SAASEDSDLVETPEDRATEEAEDEQP) are disordered.

The protein belongs to the bacterial ribosomal protein bL9 family.

In terms of biological role, binds to the 23S rRNA. This chain is Large ribosomal subunit protein bL9, found in Dinoroseobacter shibae (strain DSM 16493 / NCIMB 14021 / DFL 12).